Here is a 2035-residue protein sequence, read N- to C-terminus: Ral GTPase-activating protein subunit alpha-1 (2035 aa).

2 disordered regions span residues Leu343–Cys384 and Asp477–Ser496. The span at Ser345–Gln365 shows a compositional bias: basic and acidic residues. 2 stretches are compositionally biased toward polar residues: residues Ser366–Cys384 and Gly486–Ser496. Phosphoserine occurs at positions 710 and 720. Residues Ser714 to Lys752 form a disordered region. Thr753 bears the Phosphothreonine mark. Ser772 bears the Phosphoserine mark. Thr777 carries the post-translational modification Phosphothreonine. Ser796 carries the post-translational modification Phosphoserine. Residues Glu807–Ser817 show a composition bias toward basic and acidic residues. Disordered regions lie at residues Glu807–Val834 and Ser848–Asp911. 2 stretches are compositionally biased toward polar residues: residues Asn824–Asn833 and Gly849–Gly862. 3 positions are modified to phosphoserine: Ser859, Ser860, and Ser863. The span at Ser894 to Asp911 shows a compositional bias: low complexity. Phosphoserine is present on residues Ser985, Ser989, Ser993, and Ser999. Polar residues predominate over residues Glu986–Ser1008. Residues Glu986–His1011 are disordered. A Phosphothreonine modification is found at Thr1001. A phosphoserine mark is found at Ser1003 and Ser1477. The minimal domain that binds to TCF3/E12 stretch occupies residues Phe1326–His2035. Residues Ser1713–Glu1748 adopt a coiled-coil conformation. The 209-residue stretch at Leu1795–Ile2003 folds into the Rap-GAP domain.

As to quaternary structure, component of the heterodimeric RalGAP1 complex with RALGAPB. Heterodimerization is required for activity. Interacts with the HLH region of TCF3/isoform E12. As to expression, expressed during embryogenesis. Expressed in the adult brain, particularly in neurons of the cortex and hippocampus.

It is found in the cytoplasm. The protein localises to the nucleus. Its function is as follows. Catalytic subunit of the heterodimeric RalGAP1 complex which acts as a GTPase activator for the Ras-like small GTPases RALA and RALB. May interact with the HLH region of TCF3/isoform E12. This chain is Ral GTPase-activating protein subunit alpha-1 (Ralgapa1), found in Mus musculus (Mouse).